A 309-amino-acid chain; its full sequence is Ornithine carbamoyltransferase (309 aa).

Residues 51-54, Gln78, Arg102, and 129-132 contribute to the carbamoyl phosphate site; these read STRT and HPVQ. L-ornithine contacts are provided by residues Asn160, Asp224, and 228-229; that span reads SM. Carbamoyl phosphate is bound by residues 264–265 and Arg292; that span reads CL.

The protein belongs to the aspartate/ornithine carbamoyltransferase superfamily. OTCase family.

Its subcellular location is the cytoplasm. It carries out the reaction carbamoyl phosphate + L-ornithine = L-citrulline + phosphate + H(+). It participates in amino-acid biosynthesis; L-arginine biosynthesis; L-arginine from L-ornithine and carbamoyl phosphate: step 1/3. Functionally, reversibly catalyzes the transfer of the carbamoyl group from carbamoyl phosphate (CP) to the N(epsilon) atom of ornithine (ORN) to produce L-citrulline. The protein is Ornithine carbamoyltransferase of Campylobacter fetus subsp. fetus (strain 82-40).